An 82-amino-acid chain; its full sequence is U7-hexatoxin-Mg1a (82 aa).

A signal peptide spans 1 to 26; the sequence is MRTIVFLIVSILLLSSAVLMLAEGNA. Residues 27–44 constitute a propeptide that is removed on maturation; that stretch reads ASHELQEYPIEESLEEQR. 4 disulfide bridges follow: C46–C62, C51–C67, C61–C77, and C69–C75. R80 carries the post-translational modification Arginine amide.

It belongs to the rTX family. As to expression, expressed by the venom gland.

Its subcellular location is the secreted. Its function is as follows. Induces flaccid paralysis when injected into lepidopteran larvae. Intracranial injection into mice causes awkwardness of movement and laboured respiration until death. This is U7-hexatoxin-Mg1a from Macrothele gigas (Japanese funnel web spider).